A 310-amino-acid chain; its full sequence is Probable deoxyhypusine synthase (310 aa).

Lys-280 serves as the catalytic Nucleophile.

It belongs to the deoxyhypusine synthase family. The cofactor is NAD(+).

The enzyme catalyses [eIF5A protein]-L-lysine + spermidine = [eIF5A protein]-deoxyhypusine + propane-1,3-diamine. It participates in protein modification; eIF5A hypusination. Functionally, catalyzes the NAD-dependent oxidative cleavage of spermidine and the subsequent transfer of the butylamine moiety of spermidine to the epsilon-amino group of a specific lysine residue of the eIF-5A precursor protein to form the intermediate deoxyhypusine residue. The polypeptide is Probable deoxyhypusine synthase (dys) (Aeropyrum pernix (strain ATCC 700893 / DSM 11879 / JCM 9820 / NBRC 100138 / K1)).